A 354-amino-acid chain; its full sequence is Nicotinate-nucleotide--dimethylbenzimidazole phosphoribosyltransferase (354 aa).

Glu-313 acts as the Proton acceptor in catalysis.

It belongs to the CobT family.

It catalyses the reaction 5,6-dimethylbenzimidazole + nicotinate beta-D-ribonucleotide = alpha-ribazole 5'-phosphate + nicotinate + H(+). It participates in nucleoside biosynthesis; alpha-ribazole biosynthesis; alpha-ribazole from 5,6-dimethylbenzimidazole: step 1/2. Catalyzes the synthesis of alpha-ribazole-5'-phosphate from nicotinate mononucleotide (NAMN) and 5,6-dimethylbenzimidazole (DMB). This chain is Nicotinate-nucleotide--dimethylbenzimidazole phosphoribosyltransferase, found in Ralstonia nicotianae (strain ATCC BAA-1114 / GMI1000) (Ralstonia solanacearum).